The primary structure comprises 669 residues: Very long-chain fatty acid transport protein (669 aa).

Over 1–5 (MSPIQ) the chain is Cytoplasmic. Residues 6–26 (VVVFALSRIFLLLFRLIKLII) form a helical membrane-spanning segment. Topologically, residues 27–148 (TPIQKSLGYL…YVAIDCTNKP (122 aa)) are extracellular. The chain crosses the membrane as a helical span at residues 149–169 (LFVFLWLSLWNIGAIPAFLNY). Residues 170 to 270 (NTKGTPLVHS…TGLPKSAIMS (101 aa)) lie on the Cytoplasmic side of the membrane. 256 to 267 (YTSGTTGLPKSA) contributes to the ATP binding site. An intramembrane segment occupies 271–339 (WRKSSVGCQV…FWKQVYLTGA (69 aa)). Over 340 to 669 (THIQYVGEVC…EAIDAQTIKL (330 aa)) the chain is Cytoplasmic. The short motif at 501-551 (DAWYRCGDLLKADEYGLWYFLDRMGDTFRWKSENVSTTEVEDQLTASNKEQ) is the FACS element. The C-terminal peroxisome targeting signal (PTS1) motif lies at 667 to 669 (IKL).

This sequence belongs to the ATP-dependent AMP-binding enzyme family. In terms of assembly, interacts with fatty acyl-CoA synthetases FAA1 and FAA4.

Its subcellular location is the lipid droplet. It is found in the cell membrane. The protein resides in the peroxisome membrane. The protein localises to the peroxisome. It catalyses the reaction a very long-chain fatty acid + ATP + CoA = a very long-chain fatty acyl-CoA + AMP + diphosphate. The enzyme catalyses tetracosanoate + ATP + CoA = tetracosanoyl-CoA + AMP + diphosphate. In terms of biological role, acyl-CoA synthetase required for both the import of long chain fatty acids (LCFAs) (C14-C18) and the activation very long chain fatty acids (VLCFAs) (C20-C26) by esterification of the fatty acids into metabolically active CoA-thioesters for subsequent degradation or incorporation into phospholipids. The transport and fatty acyl-CoA synthetase activities are genetically separable and are thus independent activities. Esterifies VLCFAs in the peroxisome matrix. The VLCFAs are actively transported into peroxisomes by a PXA1-PXA2 heterodimeric transporter in the peroxisomal membrane. In Saccharomyces cerevisiae (strain ATCC 204508 / S288c) (Baker's yeast), this protein is Very long-chain fatty acid transport protein (FAT1).